The primary structure comprises 373 residues: Dual-specificity RNA methyltransferase RlmN (373 aa).

The active-site Proton acceptor is E94. Residues 100–339 (EDDRATLCVS…VIVRKTRGDD (240 aa)) enclose the Radical SAM core domain. A disulfide bridge links C107 with C344. [4Fe-4S] cluster is bound by residues C114, C118, and C121. S-adenosyl-L-methionine-binding positions include 168-169 (GE), S200, 222-224 (SIH), and N301. The active-site S-methylcysteine intermediate is the C344.

It belongs to the radical SAM superfamily. RlmN family. Requires [4Fe-4S] cluster as cofactor.

It localises to the cytoplasm. It carries out the reaction adenosine(2503) in 23S rRNA + 2 reduced [2Fe-2S]-[ferredoxin] + 2 S-adenosyl-L-methionine = 2-methyladenosine(2503) in 23S rRNA + 5'-deoxyadenosine + L-methionine + 2 oxidized [2Fe-2S]-[ferredoxin] + S-adenosyl-L-homocysteine. The enzyme catalyses adenosine(37) in tRNA + 2 reduced [2Fe-2S]-[ferredoxin] + 2 S-adenosyl-L-methionine = 2-methyladenosine(37) in tRNA + 5'-deoxyadenosine + L-methionine + 2 oxidized [2Fe-2S]-[ferredoxin] + S-adenosyl-L-homocysteine. Specifically methylates position 2 of adenine 2503 in 23S rRNA and position 2 of adenine 37 in tRNAs. m2A2503 modification seems to play a crucial role in the proofreading step occurring at the peptidyl transferase center and thus would serve to optimize ribosomal fidelity. The polypeptide is Dual-specificity RNA methyltransferase RlmN (Shewanella amazonensis (strain ATCC BAA-1098 / SB2B)).